The following is a 146-amino-acid chain: Snaclec jerdonibitin subunit beta (146 aa).

Positions 1–23 are cleaved as a signal peptide; sequence MGRFIFVSFGLLVVFLSLSGTGA. 3 cysteine pairs are disulfide-bonded: Cys-25-Cys-36, Cys-53-Cys-142, and Cys-119-Cys-134. The region spanning 32–143 is the C-type lectin domain; it reads YEGHCYRVFQ…CSKTYPFVCK (112 aa).

This sequence belongs to the snaclec family. Heterodimer of subunits alpha and beta; disulfide-linked. As to expression, expressed by the venom gland.

Its subcellular location is the secreted. Functionally, snaclec that dose-dependently inhibits platelet aggregation induced by ristocetin or low-dose thrombin, but not by high-dose thrombin. Binds to GPIbalpha (GP1BA). In vivo, also dose-dependently induces thrombocytopenia of mice and platelet counts remains at very low level even after 18 hours intravenous injection. The chain is Snaclec jerdonibitin subunit beta from Protobothrops jerdonii (Jerdon's pitviper).